The chain runs to 36 residues: Peptide POLARIS (36 aa).

This sequence belongs to the POLARIS peptide family. Mostly expressed in the embryonic root from the heart stage and in the seedling primary and lateral root tips, especially in the columella initials and lateral root cap. Also detectable in aerial parts of the seedling, sepals and leaves, principally in vascular tissues of the lamina and petiole.

Required for correct root growth and vascular development, probably by modulating both cell division rate in meristems and cell elongation in roots. Negative regulator of the ethylene signaling pathway that modulates microtubule cytoskeleton dynamics and auxin transport and homeostasis, and possibly cytokinin signaling, thus influencing root growth and lateral root development. The chain is Peptide POLARIS (PLS) from Arabidopsis thaliana (Mouse-ear cress).